A 37-amino-acid polypeptide reads, in one-letter code: Large ribosomal subunit protein bL36c (37 aa).

This sequence belongs to the bacterial ribosomal protein bL36 family.

The protein resides in the plastid. The sequence is that of Large ribosomal subunit protein bL36c (rpl36) from Euglena longa (Euglenophycean alga).